A 423-amino-acid chain; its full sequence is Sphingomyelin phosphodiesterase 2 (423 aa).

Glu49 contacts Mg(2+). Catalysis depends on His272, which acts as the Proton acceptor. The next 2 membrane-spanning stretches (helical) occupy residues 330 to 350 (VIGL…GGGA) and 354 to 374 (AILL…FYLF). Residues 400–423 (QDLGPEPQPALLLGQQEGDRTKEQ) are disordered.

The protein belongs to the neutral sphingomyelinase family. The cofactor is Mg(2+).

Its subcellular location is the cell membrane. It carries out the reaction a sphingomyelin + H2O = phosphocholine + an N-acylsphing-4-enine + H(+). The enzyme catalyses an N-(acyl)-sphingosylphosphocholine + H2O = an N-acyl-sphingoid base + phosphocholine + H(+). It catalyses the reaction 1-O-octadecyl-sn-glycero-3-phosphocholine + H2O = 1-O-octadecyl-sn-glycerol + phosphocholine + H(+). The catalysed reaction is 1-O-hexadecyl-sn-glycero-3-phosphocholine + H2O = 1-O-hexadecyl-sn-glycerol + phosphocholine + H(+). It carries out the reaction 1-hexadecanoyl-sn-glycero-3-phosphocholine + H2O = 1-hexadecanoyl-sn-glycerol + phosphocholine + H(+). The enzyme catalyses a sphingosylphosphocholine + H2O = a sphingoid base + phosphocholine + H(+). It functions in the pathway lipid metabolism; sphingolipid metabolism. Its function is as follows. Catalyzes, at least in vitro, the hydrolysis of sphingomyelin to form ceramide and phosphocholine. Also hydrolyzes 1-O-alkyl-2-lyso-sn-glycero-3-phosphocholine (lyso-platelet-activating factor) in vivo. Also acts on 1-acyl-2-lyso-sn-glycero-3-phosphocholine (lyso-PC) and sphingosylphosphocholine. The sequence is that of Sphingomyelin phosphodiesterase 2 from Homo sapiens (Human).